The chain runs to 184 residues: Holliday junction branch migration complex subunit RuvA (184 aa).

The domain I stretch occupies residues Met-1 to Leu-64. A domain II region spans residues Asp-65–Glu-145. A region of interest (flexible linker) is located at residue Glu-145. Positions Glu-145–Ala-184 are domain III.

It belongs to the RuvA family. As to quaternary structure, homotetramer. Forms an RuvA(8)-RuvB(12)-Holliday junction (HJ) complex. HJ DNA is sandwiched between 2 RuvA tetramers; dsDNA enters through RuvA and exits via RuvB. An RuvB hexamer assembles on each DNA strand where it exits the tetramer. Each RuvB hexamer is contacted by two RuvA subunits (via domain III) on 2 adjacent RuvB subunits; this complex drives branch migration. In the full resolvosome a probable DNA-RuvA(4)-RuvB(12)-RuvC(2) complex forms which resolves the HJ.

It localises to the cytoplasm. Its function is as follows. The RuvA-RuvB-RuvC complex processes Holliday junction (HJ) DNA during genetic recombination and DNA repair, while the RuvA-RuvB complex plays an important role in the rescue of blocked DNA replication forks via replication fork reversal (RFR). RuvA specifically binds to HJ cruciform DNA, conferring on it an open structure. The RuvB hexamer acts as an ATP-dependent pump, pulling dsDNA into and through the RuvAB complex. HJ branch migration allows RuvC to scan DNA until it finds its consensus sequence, where it cleaves and resolves the cruciform DNA. The polypeptide is Holliday junction branch migration complex subunit RuvA (Campylobacter hominis (strain ATCC BAA-381 / DSM 21671 / CCUG 45161 / LMG 19568 / NCTC 13146 / CH001A)).